The chain runs to 349 residues: Hypoxia-inducible factor 1-alpha inhibitor (349 aa).

The span at 1–10 (MAATAAEAVA) shows a compositional bias: low complexity. Positions 1–51 (MAATAAEAVASGSGEPREEAGALGPAWDESQLRSYSFPTRPIPRLSQSDPR) are disordered. A2 carries the post-translational modification N-acetylalanine. An interaction with VHL region spans residues 2–125 (AATAAEAVAS…PRSNREEMKF (124 aa)). In terms of domain architecture, JmjC spans 142–312 (ERLYLQQTLN…PKRIEYPLKA (171 aa)). Residue Y145 coordinates 2-oxoglutarate. Substrate-binding positions include D152 and 181–183 (QLT). Residue T196 coordinates 2-oxoglutarate. 2 residues coordinate Fe cation: H199 and D201. A substrate-binding site is contributed by 201–203 (DEQ). 2 residues coordinate 2-oxoglutarate: N205 and K214. 238–239 (RQ) is a binding site for substrate. H279 serves as a coordination point for Fe cation. N294 contributes to the 2-oxoglutarate binding site. The substrate site is built by A300 and N321.

As to quaternary structure, homodimer; homodimerization is essential for catalytic activity. Interacts with VHL and HIF1A. Part of a complex with VHL, HIF1A and HDAC1 or HDAC2 or HDAC3. Interacts with NFKB1 and NFKBIA. Interacts with NOTCH1, NOTCH2 and NOTCH3 but not with NOTCH4. Interacts with APBA3; binding inhibits HIF1AN binding to HIF1A. Interacts with TNKS2. Interacts with PPP1R12A. Interacts with ASB4. Interacts with UBE3A. Interacts with ANKS3. Interacts with NECAB3; the interaction is indirect and seems to be mediated by APBA3. Fe(2+) serves as cofactor.

The protein resides in the nucleus. It localises to the cytoplasm. Its subcellular location is the perinuclear region. It carries out the reaction L-asparaginyl-[hypoxia-inducible factor alpha subunit] + 2-oxoglutarate + O2 = (3S)-3-hydroxy-L-asparaginyl-[hypoxia-inducible factor alpha subunit] + succinate + CO2. The enzyme catalyses L-histidyl-[ankyrin-repeat domain protein] + 2-oxoglutarate + O2 = (3S)-3-hydroxy-L-histidyl-[ankyrin-repeat domain protein] + succinate + CO2. It catalyses the reaction L-asparaginyl-[ankyrin-repeat domain protein] + 2-oxoglutarate + O2 = (3S)-3-hydroxy-L-asparaginyl-[ankyrin-repeat domain protein] + succinate + CO2. The catalysed reaction is L-aspartyl-[ankyrin-repeat domain protein] + 2-oxoglutarate + O2 = (3S)-3-hydroxy-L-aspartyl-[ankyrin-repeat domain protein] + succinate + CO2. Functionally, hydroxylates HIF-1 alpha at 'Asn-803' in the C-terminal transactivation domain (CAD). Functions as an oxygen sensor and, under normoxic conditions, the hydroxylation prevents interaction of HIF-1 with transcriptional coactivators including Cbp/p300-interacting transactivator. Involved in transcriptional repression through interaction with HIF1A, VHL and histone deacetylases. Hydroxylates specific Asn residues within ankyrin repeat domains (ARD) of NFKB1, NFKBIA, NOTCH1, ASB4, PPP1R12A and several other ARD-containing proteins. Also hydroxylates Asp and His residues within ARDs of ANK1 and TNKS2, respectively. Negatively regulates NOTCH1 activity, accelerating myogenic differentiation. Positively regulates ASB4 activity, promoting vascular differentiation. This chain is Hypoxia-inducible factor 1-alpha inhibitor (HIF1AN), found in Homo sapiens (Human).